Here is a 256-residue protein sequence, read N- to C-terminus: 4-hydroxy-tetrahydrodipicolinate reductase (256 aa).

8–13 contributes to the NAD(+) binding site; sequence GASGKM. Residue Lys-36 coordinates NADP(+). NAD(+) is bound by residues 87-89 and 111-114; these read GTT and ATNM. Catalysis depends on His-143, which acts as the Proton donor/acceptor. His-144 contributes to the (S)-2,3,4,5-tetrahydrodipicolinate binding site. Lys-147 acts as the Proton donor in catalysis. Residue 153–154 coordinates (S)-2,3,4,5-tetrahydrodipicolinate; the sequence is GT.

The protein belongs to the DapB family.

The protein localises to the cytoplasm. It catalyses the reaction (S)-2,3,4,5-tetrahydrodipicolinate + NAD(+) + H2O = (2S,4S)-4-hydroxy-2,3,4,5-tetrahydrodipicolinate + NADH + H(+). The catalysed reaction is (S)-2,3,4,5-tetrahydrodipicolinate + NADP(+) + H2O = (2S,4S)-4-hydroxy-2,3,4,5-tetrahydrodipicolinate + NADPH + H(+). It functions in the pathway amino-acid biosynthesis; L-lysine biosynthesis via DAP pathway; (S)-tetrahydrodipicolinate from L-aspartate: step 4/4. In terms of biological role, catalyzes the conversion of 4-hydroxy-tetrahydrodipicolinate (HTPA) to tetrahydrodipicolinate. The protein is 4-hydroxy-tetrahydrodipicolinate reductase of Campylobacter concisus (strain 13826).